Consider the following 141-residue polypeptide: MMALFELPQINNVRTKRNVIRALEKYKIMRVRLGERRMPKLTSTLTIVPPSFNNEFHSTTEESAIWNVDAVNEAKAYVKLIDHHINQLPERSRQVILTKFIEENSDYEAMLAIHVSHSQYKEEKRKAIERLAYQLNIVVEK.

This is an uncharacterized protein from Listeria innocua serovar 6a (strain ATCC BAA-680 / CLIP 11262).